The following is a 167-amino-acid chain: Gem-associated protein 6 (167 aa).

Residues 7 to 74 (KGPLEWQDYI…VQTVETMNEG (68 aa)) form the Sm domain. The region spanning 69–167 (ETMNEGDHRV…LIEGHLTASQ (99 aa)) is the AD domain. Serine 95 and serine 166 each carry phosphoserine.

As to quaternary structure, part of the core SMN complex that contains SMN1, GEMIN2/SIP1, DDX20/GEMIN3, GEMIN4, GEMIN5, GEMIN6, GEMIN7, GEMIN8 and STRAP/UNRIP. Part of the SMN-Sm complex that contains SMN1, GEMIN2/SIP1, DDX20/GEMIN3, GEMIN4, GEMIN5, GEMIN6, GEMIN7, GEMIN8, STRAP/UNRIP and the Sm proteins SNRPB, SNRPD1, SNRPD2, SNRPD3, SNRPE, SNRPF and SNRPG. Interacts with GEMIN7; the interaction is direct. Interacts with GEMIN8; the interaction is direct. Interacts with SNRPB, SNRPD2, SNRPD3 and SNRPE; the interaction is direct.

Its subcellular location is the nucleus. The protein resides in the nucleoplasm. The protein localises to the gem. It localises to the cytoplasm. Its function is as follows. The SMN complex catalyzes the assembly of small nuclear ribonucleoproteins (snRNPs), the building blocks of the spliceosome, and thereby plays an important role in the splicing of cellular pre-mRNAs. Most spliceosomal snRNPs contain a common set of Sm proteins SNRPB, SNRPD1, SNRPD2, SNRPD3, SNRPE, SNRPF and SNRPG that assemble in a heptameric protein ring on the Sm site of the small nuclear RNA to form the core snRNP (Sm core). In the cytosol, the Sm proteins SNRPD1, SNRPD2, SNRPE, SNRPF and SNRPG are trapped in an inactive 6S pICln-Sm complex by the chaperone CLNS1A that controls the assembly of the core snRNP. To assemble core snRNPs, the SMN complex accepts the trapped 5Sm proteins from CLNS1A forming an intermediate. Binding of snRNA inside 5Sm triggers eviction of the SMN complex, thereby allowing binding of SNRPD3 and SNRPB to complete assembly of the core snRNP. This Homo sapiens (Human) protein is Gem-associated protein 6 (GEMIN6).